A 349-amino-acid polypeptide reads, in one-letter code: MPMSRPDSAVSLLPDYSLRAHNTFGFDARARVAARIGSPGQFASLARDPRVAGLDRLVLGGGSNVVFTRDFDGLVLLDEIRGRALVREDDGAWYVEAGGGENWHAFVEWTLAEGMPGLENLALIPGTVGAAPIQNIGAYGLEMKEHFASLRAVELATGELVEFDAARCAFGYRDSFFKRDGRGRFAIVAVTFRLPKAWTPRIGYADVARELAARGIDARAVRARDVFDAVVAIRRAKLPDPLALGNAGSFFKNPVIDAQAFAALRAREPDIVSYPQPDGRVKLAAGWLIDRCGWKGRALGAAAVHERQALVLVNLGGASGADVLALAHAIRRDVLGRFGVELEMEPVCL.

The region spanning 26 to 197 (FDARARVAAR…VAVTFRLPKA (172 aa)) is the FAD-binding PCMH-type domain. The active site involves R173. Residue S249 is the Proton donor of the active site. Residue E345 is part of the active site.

This sequence belongs to the MurB family. FAD is required as a cofactor.

It is found in the cytoplasm. The catalysed reaction is UDP-N-acetyl-alpha-D-muramate + NADP(+) = UDP-N-acetyl-3-O-(1-carboxyvinyl)-alpha-D-glucosamine + NADPH + H(+). Its pathway is cell wall biogenesis; peptidoglycan biosynthesis. Cell wall formation. This Burkholderia pseudomallei (strain 1710b) protein is UDP-N-acetylenolpyruvoylglucosamine reductase.